The primary structure comprises 420 residues: Tyrosine--tRNA ligase (420 aa).

Tyr-36 contacts L-tyrosine. The 'HIGH' region signature appears at 41-50 (PTADSLHIGH). Positions 170 and 174 each coordinate L-tyrosine. Residues 231–235 (KFGKT) carry the 'KMSKS' region motif. Position 234 (Lys-234) interacts with ATP. Residues 353 to 420 (RNIVEVIVET…KKKYFMVNYK (68 aa)) enclose the S4 RNA-binding domain.

It belongs to the class-I aminoacyl-tRNA synthetase family. TyrS type 1 subfamily. In terms of assembly, homodimer.

Its subcellular location is the cytoplasm. The enzyme catalyses tRNA(Tyr) + L-tyrosine + ATP = L-tyrosyl-tRNA(Tyr) + AMP + diphosphate + H(+). Catalyzes the attachment of tyrosine to tRNA(Tyr) in a two-step reaction: tyrosine is first activated by ATP to form Tyr-AMP and then transferred to the acceptor end of tRNA(Tyr). The protein is Tyrosine--tRNA ligase of Staphylococcus saprophyticus subsp. saprophyticus (strain ATCC 15305 / DSM 20229 / NCIMB 8711 / NCTC 7292 / S-41).